Reading from the N-terminus, the 150-residue chain is Arginine repressor (150 aa).

This sequence belongs to the ArgR family.

The protein localises to the cytoplasm. The protein operates within amino-acid biosynthesis; L-arginine biosynthesis [regulation]. Its function is as follows. Regulates arginine biosynthesis genes. In Desulforudis audaxviator (strain MP104C), this protein is Arginine repressor.